The following is a 158-amino-acid chain: MALITTGSKFLRALEQEGALAVYAPLEGGYEGRYLRRLRSKGYSALTYSARGLGDPAQFLMDIHGVRPPHLGKQTIGNEAAVGRVEYVLPLVGYPLQNLPANAKGLVLWLLEGHVLSPQELSYFVTLPQAEPRLKVVIEMGGDRGFSWQPLAAVAEAA.

It belongs to the complex I NdhN subunit family. In terms of assembly, NDH-1 can be composed of about 15 different subunits; different subcomplexes with different compositions have been identified which probably have different functions.

Its subcellular location is the cellular thylakoid membrane. It catalyses the reaction a plastoquinone + NADH + (n+1) H(+)(in) = a plastoquinol + NAD(+) + n H(+)(out). The catalysed reaction is a plastoquinone + NADPH + (n+1) H(+)(in) = a plastoquinol + NADP(+) + n H(+)(out). In terms of biological role, NDH-1 shuttles electrons from an unknown electron donor, via FMN and iron-sulfur (Fe-S) centers, to quinones in the respiratory and/or the photosynthetic chain. The immediate electron acceptor for the enzyme in this species is believed to be plastoquinone. Couples the redox reaction to proton translocation, and thus conserves the redox energy in a proton gradient. Cyanobacterial NDH-1 also plays a role in inorganic carbon-concentration. This chain is NAD(P)H-quinone oxidoreductase subunit N, found in Synechococcus elongatus (strain ATCC 33912 / PCC 7942 / FACHB-805) (Anacystis nidulans R2).